We begin with the raw amino-acid sequence, 336 residues long: MMKDRLILAIETSCDETSVAVLRNDAELLSNVIASQIASHQRFGGVVPEVASRHHVEVITACIEEALLEAEVTAEDLTAVAVTYGPGLVGALLVGISAAKAFAWANGLPLIPVNHMAGHLMAARAVKELEFPLLALLVSGGHTELVYVSEAGDYKIVGETRDDAVGEAYDKVGRVMGLPYPAGRVIDELAHEGQDIYDFPRAMIKEDNLEFSFSGLKSAFINLYHNAQQKGETLSNADLSASFQACVMDILMAKTKKALEQYPVKTLVVAGGVAANQGLRERLAAEITDVEVIIPPLRLCGDNAGMIALAAVSEYNKENLAGWDLNAKPSLAFENL.

H115 and H119 together coordinate Fe cation. Substrate contacts are provided by residues 137 to 141 (LVSGG), D170, G183, D187, and N276. D302 is a Fe cation binding site.

This sequence belongs to the KAE1 / TsaD family. Requires Fe(2+) as cofactor.

The protein resides in the cytoplasm. The catalysed reaction is L-threonylcarbamoyladenylate + adenosine(37) in tRNA = N(6)-L-threonylcarbamoyladenosine(37) in tRNA + AMP + H(+). Required for the formation of a threonylcarbamoyl group on adenosine at position 37 (t(6)A37) in tRNAs that read codons beginning with adenine. Is involved in the transfer of the threonylcarbamoyl moiety of threonylcarbamoyl-AMP (TC-AMP) to the N6 group of A37, together with TsaE and TsaB. TsaD likely plays a direct catalytic role in this reaction. The polypeptide is tRNA N6-adenosine threonylcarbamoyltransferase (Streptococcus suis (strain 98HAH33)).